The following is a 327-amino-acid chain: N-acetylmuramoyl-L-alanine amidase sle1 (327 aa).

Positions 1-25 (MRKKIIATVIGTSALAAVTWTNADA) are cleaved as a signal peptide. LysM domains lie at 27–70 (TTYK…SLKV), 86–129 (STYT…KLKV), and 150–193 (TTYT…KLKV). A disordered region spans residues 68 to 89 (LKVSGSTSSSTSSNTSTGSTYT). The span at 71–87 (SGSTSSSTSSNTSTGST) shows a compositional bias: low complexity. Residues 203 to 327 (GSSSTGSAGY…SQVSSYVYIH (125 aa)) form the Peptidase C51 domain.

The protein localises to the secreted. The protein resides in the cell surface. It carries out the reaction Hydrolyzes the link between N-acetylmuramoyl residues and L-amino acid residues in certain cell-wall glycopeptides.. In terms of biological role, peptidoglycan hydrolase involved in the splitting of the septum during cell division. This Staphylococcus saprophyticus subsp. saprophyticus (strain ATCC 15305 / DSM 20229 / NCIMB 8711 / NCTC 7292 / S-41) protein is N-acetylmuramoyl-L-alanine amidase sle1 (sle1).